The primary structure comprises 480 residues: Probable glycine dehydrogenase (decarboxylating) subunit 2 (480 aa).

An N6-(pyridoxal phosphate)lysine modification is found at Lys-265.

It belongs to the GcvP family. C-terminal subunit subfamily. As to quaternary structure, the glycine cleavage system is composed of four proteins: P, T, L and H. In this organism, the P 'protein' is a heterodimer of two subunits. Requires pyridoxal 5'-phosphate as cofactor.

The enzyme catalyses N(6)-[(R)-lipoyl]-L-lysyl-[glycine-cleavage complex H protein] + glycine + H(+) = N(6)-[(R)-S(8)-aminomethyldihydrolipoyl]-L-lysyl-[glycine-cleavage complex H protein] + CO2. The glycine cleavage system catalyzes the degradation of glycine. The P protein binds the alpha-amino group of glycine through its pyridoxal phosphate cofactor; CO(2) is released and the remaining methylamine moiety is then transferred to the lipoamide cofactor of the H protein. This Thermosipho africanus (strain TCF52B) protein is Probable glycine dehydrogenase (decarboxylating) subunit 2.